Consider the following 398-residue polypeptide: Phosphoglycerate kinase (398 aa).

Residues 21-23, R41, 64-67, R123, and R156 each bind substrate; these read DFN and HLGR. Residues K207, G294, E325, and 354–357 each bind ATP; that span reads GGDS.

It belongs to the phosphoglycerate kinase family. Monomer.

Its subcellular location is the cytoplasm. It carries out the reaction (2R)-3-phosphoglycerate + ATP = (2R)-3-phospho-glyceroyl phosphate + ADP. Its pathway is carbohydrate degradation; glycolysis; pyruvate from D-glyceraldehyde 3-phosphate: step 2/5. This is Phosphoglycerate kinase from Salinibacter ruber (strain DSM 13855 / M31).